A 218-amino-acid chain; its full sequence is Adenylate kinase (218 aa).

An ATP-binding site is contributed by Gly10 to Thr15. The tract at residues Ser30 to Val59 is NMP. AMP is bound by residues Thr31, Arg36, Gly57–Val59, Gly85–Arg88, and Gln92. Residues Gly122–Asp159 form an LID region. ATP contacts are provided by residues Arg123 and Thr132–Tyr133. AMP is bound by residues Arg156 and Arg167. Gly203 is an ATP binding site.

The protein belongs to the adenylate kinase family. In terms of assembly, monomer.

It localises to the cytoplasm. The enzyme catalyses AMP + ATP = 2 ADP. It functions in the pathway purine metabolism; AMP biosynthesis via salvage pathway; AMP from ADP: step 1/1. Functionally, catalyzes the reversible transfer of the terminal phosphate group between ATP and AMP. Plays an important role in cellular energy homeostasis and in adenine nucleotide metabolism. The polypeptide is Adenylate kinase (Albidiferax ferrireducens (strain ATCC BAA-621 / DSM 15236 / T118) (Rhodoferax ferrireducens)).